The chain runs to 414 residues: Serine hydroxymethyltransferase (414 aa).

Residues Leu-116 and 120–122 (GHL) each bind (6S)-5,6,7,8-tetrahydrofolate. At Lys-224 the chain carries N6-(pyridoxal phosphate)lysine. 348 to 350 (SPF) contributes to the (6S)-5,6,7,8-tetrahydrofolate binding site.

It belongs to the SHMT family. Homodimer. The cofactor is pyridoxal 5'-phosphate.

It is found in the cytoplasm. It catalyses the reaction (6R)-5,10-methylene-5,6,7,8-tetrahydrofolate + glycine + H2O = (6S)-5,6,7,8-tetrahydrofolate + L-serine. It functions in the pathway one-carbon metabolism; tetrahydrofolate interconversion. It participates in amino-acid biosynthesis; glycine biosynthesis; glycine from L-serine: step 1/1. Its function is as follows. Catalyzes the reversible interconversion of serine and glycine with tetrahydrofolate (THF) serving as the one-carbon carrier. This reaction serves as the major source of one-carbon groups required for the biosynthesis of purines, thymidylate, methionine, and other important biomolecules. Also exhibits THF-independent aldolase activity toward beta-hydroxyamino acids, producing glycine and aldehydes, via a retro-aldol mechanism. The polypeptide is Serine hydroxymethyltransferase (Campylobacter jejuni subsp. doylei (strain ATCC BAA-1458 / RM4099 / 269.97)).